A 739-amino-acid chain; its full sequence is Nucleoprotein (739 aa).

Residues 334 to 363 (VNVGEQYQQLREAATEAEKQLQQYAESREL) are a coiled coil. The tract at residues 415 to 646 (PKTSGHYDDD…QDSDNTQPEH (232 aa)) is disordered. Low complexity-rich tracts occupy residues 449-458 (SQDTTIPDVV) and 504-514 (KGGQQKNSQKG). A compositionally biased stretch (polar residues) spans 520 to 530 (RQTQSRPTQNI). Residues 567–579 (EEADPLDDADDET) are compositionally biased toward acidic residues. The segment covering 611–638 (YRDHSEKKELPQDERQDQDHTQEARNQD) has biased composition (basic and acidic residues).

It belongs to the filoviruses nucleoprotein family. As to quaternary structure, homooligomer. Homomultimerizes to form the nucleocapsid. Binds to viral genomic RNA. Interacts with VP35 and VP30 to form the nucleocapsid. Interacts with host PPP2R5C; this interaction leads to VP30 dephosphorylation and viral transcription. Interacts with VP24; this interaction facilitates nucleocapsid assembly and genome packaging. Interacts with matrix protein VP40; this interaction allows recruitment of the nucleocapsid into progeny virions. Interacts with host STAU1. Interacts with host NXF1 (via RNA-binding domain); this interaction recruits NXF1 to the inclusion bodies were viral replication takes place, probably to export viral mRNA-NXF1 complexes from these sites. Interacts with host CCDC92; this interaction sequesters NP in the host cytoplasm. Interacts with host TRIM14. In terms of processing, phosphorylated and O-glycosylated by host. Acetylated by host EP300 in vitro.

The protein localises to the virion. It is found in the host cytoplasm. Its function is as follows. Oligomerizes into helical capsid to encapsidate the viral genome, protecting it from nucleases and the cellular innate immune response. VP35 binds to and stabilizes monomeric NP, keeping it soluble. Upon virus replication, NP is recruited to bind cooperatively viral genomic RNA and VP35 is released. The encapsidated genomic RNA is termed the nucleocapsid and serves as template for transcription and replication. The nucleocapsid is helical with a pitch of 10.81 NP per turn and a diameter of about 22nm. Each NP binds to six nucleotides of viral genomic RNA, three being exposed to the solvant and three hidden into the nucleocapsid. Also recruits host PPP2R5C phosphatase to dephosphorylate VP30 and thereby promote viral transcription. Upon virion assembly and budding, NP binds to VP24 and possibly host STAU1. The polypeptide is Nucleoprotein (NP) (Zaire ebolavirus (strain Gabon-94) (ZEBOV)).